A 72-amino-acid chain; its full sequence is Translational regulator CsrA (72 aa).

It belongs to the CsrA/RsmA family. In terms of assembly, homodimer; the beta-strands of each monomer intercalate to form a hydrophobic core, while the alpha-helices form wings that extend away from the core.

The protein localises to the cytoplasm. In terms of biological role, a translational regulator that binds mRNA to regulate translation initiation and/or mRNA stability. Usually binds in the 5'-UTR at or near the Shine-Dalgarno sequence preventing ribosome-binding, thus repressing translation. Its main target seems to be the major flagellin gene, while its function is anatagonized by FliW. The sequence is that of Translational regulator CsrA from Clostridium novyi (strain NT).